The primary structure comprises 122 residues: Large ribosomal subunit protein uL18 (122 aa).

Belongs to the universal ribosomal protein uL18 family. In terms of assembly, part of the 50S ribosomal subunit; part of the 5S rRNA/L5/L18/L25 subcomplex. Contacts the 5S and 23S rRNAs.

Functionally, this is one of the proteins that bind and probably mediate the attachment of the 5S RNA into the large ribosomal subunit, where it forms part of the central protuberance. The protein is Large ribosomal subunit protein uL18 of Agathobacter rectalis (strain ATCC 33656 / DSM 3377 / JCM 17463 / KCTC 5835 / VPI 0990) (Eubacterium rectale).